The following is a 299-amino-acid chain: Epimerase family protein SH2119 (299 aa).

It belongs to the NAD(P)-dependent epimerase/dehydratase family. SDR39U1 subfamily.

This chain is Epimerase family protein SH2119, found in Staphylococcus haemolyticus (strain JCSC1435).